A 142-amino-acid chain; its full sequence is Large ribosomal subunit protein uL11 (142 aa).

It belongs to the universal ribosomal protein uL11 family. As to quaternary structure, part of the ribosomal stalk of the 50S ribosomal subunit. Interacts with L10 and the large rRNA to form the base of the stalk. L10 forms an elongated spine to which L12 dimers bind in a sequential fashion forming a multimeric L10(L12)X complex. In terms of processing, one or more lysine residues are methylated.

In terms of biological role, forms part of the ribosomal stalk which helps the ribosome interact with GTP-bound translation factors. This Tolumonas auensis (strain DSM 9187 / NBRC 110442 / TA 4) protein is Large ribosomal subunit protein uL11.